A 269-amino-acid chain; its full sequence is Eukaryotic translation initiation factor 3 subunit G-1 (269 aa).

The 79-residue stretch at 188 to 266 (AAIRISNLSE…LILSVEWSKP (79 aa)) folds into the RRM domain.

It belongs to the eIF-3 subunit G family. In terms of assembly, component of the eukaryotic translation initiation factor 3 (eIF-3) complex. The eIF-3 complex interacts with pix.

Its subcellular location is the cytoplasm. RNA-binding component of the eukaryotic translation initiation factor 3 (eIF-3) complex, which is involved in protein synthesis of a specialized repertoire of mRNAs and, together with other initiation factors, stimulates binding of mRNA and methionyl-tRNAi to the 40S ribosome. The eIF-3 complex specifically targets and initiates translation of a subset of mRNAs involved in cell proliferation. This subunit can bind 18S rRNA. In Drosophila mojavensis (Fruit fly), this protein is Eukaryotic translation initiation factor 3 subunit G-1.